We begin with the raw amino-acid sequence, 252 residues long: Ribosomal RNA small subunit methyltransferase J (252 aa).

S-adenosyl-L-methionine contacts are provided by residues 101–102 (RD), 117–118 (ER), 153–154 (SS), and aspartate 171.

Belongs to the methyltransferase superfamily. RsmJ family.

The protein resides in the cytoplasm. It carries out the reaction guanosine(1516) in 16S rRNA + S-adenosyl-L-methionine = N(2)-methylguanosine(1516) in 16S rRNA + S-adenosyl-L-homocysteine + H(+). Specifically methylates the guanosine in position 1516 of 16S rRNA. The sequence is that of Ribosomal RNA small subunit methyltransferase J from Salmonella typhi.